Here is a 484-residue protein sequence, read N- to C-terminus: 1,4-beta-D-glucan cellobiohydrolase CEL6A (484 aa).

The first 17 residues, 1–17 (MAKRLLLTAALAATTLA), serve as a signal peptide directing secretion. The CBM1 domain maps to 26 to 62 (NCGSVWSQCGGQGWTGATCCASGSTCVAQNQWYSQCL). 2 cysteine pairs are disulfide-bonded: Cys-34/Cys-51 and Cys-45/Cys-61. The tract at residues 68 to 98 (TTTAQAPSSTRTTTSSSSRPTSSSISTSAVN) is disordered. Substrate contacts are provided by Trp-171 and Asp-173. A glycan (N-linked (GlcNAc...) asparagine) is linked at Asn-175. The segment at 208 to 230 (YDLPDRDCAAAASNGEWAIADGG) is substrate binding loop 1. The active-site Proton donor is Asp-260. Residues His-305, Trp-308, Asn-344, Trp-405, Lys-433, and Glu-437 each coordinate substrate. The tract at residues 431–469 (WIKPGGECDGTSDTTAARYDHHCGFADALKPAPEAGQWF) is substrate binding loop 2. Asp-439 acts as the Proton acceptor in catalysis.

Belongs to the glycosyl hydrolase 6 (cellulase B) family. Monomer. Post-translationally, both N- and O-glycosylated.

It is found in the secreted. The catalysed reaction is Hydrolysis of (1-&gt;4)-beta-D-glucosidic linkages in cellulose and cellotetraose, releasing cellobiose from the non-reducing ends of the chains.. Its function is as follows. Exoglucanase that plays an important function in biomass degradation by catalyzing the hydrolysis of the non-reducing end beta-1,4-glucosidic linkages in cellulose and cellotetraose to release cellobiose. Hydrolyzes crystalline and amorphous cellulose but is inactive on hydroxyethyl cellulose, mannan, galactomannan, xyloglucan, arabinoxylan, arabinan, xylan, and pectin. The sequence is that of 1,4-beta-D-glucan cellobiohydrolase CEL6A from Podospora anserina (strain S / ATCC MYA-4624 / DSM 980 / FGSC 10383) (Pleurage anserina).